The sequence spans 348 residues: Methylthioribose-1-phosphate isomerase (348 aa).

Substrate-binding positions include 47 to 49 (RGA), Arg90, and Gln196. Residue Asp237 is the Proton donor of the active site. Residue 247-248 (NK) coordinates substrate.

It belongs to the eIF-2B alpha/beta/delta subunits family. MtnA subfamily.

It catalyses the reaction 5-(methylsulfanyl)-alpha-D-ribose 1-phosphate = 5-(methylsulfanyl)-D-ribulose 1-phosphate. It functions in the pathway amino-acid biosynthesis; L-methionine biosynthesis via salvage pathway; L-methionine from S-methyl-5-thio-alpha-D-ribose 1-phosphate: step 1/6. Its function is as follows. Catalyzes the interconversion of methylthioribose-1-phosphate (MTR-1-P) into methylthioribulose-1-phosphate (MTRu-1-P). This Synechococcus sp. (strain ATCC 27144 / PCC 6301 / SAUG 1402/1) (Anacystis nidulans) protein is Methylthioribose-1-phosphate isomerase.